A 227-amino-acid chain; its full sequence is Cytochrome c oxidase subunit 2 (227 aa).

At 1–14 (MAHAAQVGLQDATS) the chain is on the mitochondrial intermembrane side. Residues 15–45 (PIMEELIIFHDHALMIIFLICFLVLYALFLT) traverse the membrane as a helical segment. The Mitochondrial matrix segment spans residues 46 to 59 (LTTKLTSTNISDAQ). The helical transmembrane segment at 60–87 (EMETVWTILPAIILVLIALPSLRILYMT) threads the bilayer. At 88-227 (DEINDPSFTI…IFEMGPVFTL (140 aa)) the chain is on the mitochondrial intermembrane side. 6 residues coordinate Cu cation: His-161, Cys-196, Glu-198, Cys-200, His-204, and Met-207. Residue Glu-198 coordinates Mg(2+).

The protein belongs to the cytochrome c oxidase subunit 2 family. In terms of assembly, component of the cytochrome c oxidase (complex IV, CIV), a multisubunit enzyme composed of 14 subunits. The complex is composed of a catalytic core of 3 subunits MT-CO1, MT-CO2 and MT-CO3, encoded in the mitochondrial DNA, and 11 supernumerary subunits COX4I, COX5A, COX5B, COX6A, COX6B, COX6C, COX7A, COX7B, COX7C, COX8 and NDUFA4, which are encoded in the nuclear genome. The complex exists as a monomer or a dimer and forms supercomplexes (SCs) in the inner mitochondrial membrane with NADH-ubiquinone oxidoreductase (complex I, CI) and ubiquinol-cytochrome c oxidoreductase (cytochrome b-c1 complex, complex III, CIII), resulting in different assemblies (supercomplex SCI(1)III(2)IV(1) and megacomplex MCI(2)III(2)IV(2)). Found in a complex with TMEM177, COA6, COX18, COX20, SCO1 and SCO2. Interacts with TMEM177 in a COX20-dependent manner. Interacts with COX20. Interacts with COX16. Requires Cu cation as cofactor.

The protein resides in the mitochondrion inner membrane. The enzyme catalyses 4 Fe(II)-[cytochrome c] + O2 + 8 H(+)(in) = 4 Fe(III)-[cytochrome c] + 2 H2O + 4 H(+)(out). Its function is as follows. Component of the cytochrome c oxidase, the last enzyme in the mitochondrial electron transport chain which drives oxidative phosphorylation. The respiratory chain contains 3 multisubunit complexes succinate dehydrogenase (complex II, CII), ubiquinol-cytochrome c oxidoreductase (cytochrome b-c1 complex, complex III, CIII) and cytochrome c oxidase (complex IV, CIV), that cooperate to transfer electrons derived from NADH and succinate to molecular oxygen, creating an electrochemical gradient over the inner membrane that drives transmembrane transport and the ATP synthase. Cytochrome c oxidase is the component of the respiratory chain that catalyzes the reduction of oxygen to water. Electrons originating from reduced cytochrome c in the intermembrane space (IMS) are transferred via the dinuclear copper A center (CU(A)) of subunit 2 and heme A of subunit 1 to the active site in subunit 1, a binuclear center (BNC) formed by heme A3 and copper B (CU(B)). The BNC reduces molecular oxygen to 2 water molecules using 4 electrons from cytochrome c in the IMS and 4 protons from the mitochondrial matrix. This Gorilla gorilla beringei (Mountain gorilla) protein is Cytochrome c oxidase subunit 2 (MT-CO2).